Consider the following 225-residue polypeptide: Ribonuclease 3 (225 aa).

The region spanning 5 to 127 is the RNase III domain; sequence IDKLERKLGY…IIGAIYLDSD (123 aa). Residue Glu-40 participates in Mg(2+) binding. Asp-44 is a catalytic residue. Residues Asp-113 and Glu-116 each coordinate Mg(2+). Glu-116 is a catalytic residue. A DRBM domain is found at 154-224; the sequence is DPKTRLQEFL…AETALEQLTN (71 aa). Positions 204-225 are disordered; it reads GTSRRKAEQAAAETALEQLTNG. The segment covering 212-225 has biased composition (low complexity); the sequence is QAAAETALEQLTNG.

It belongs to the ribonuclease III family. As to quaternary structure, homodimer. Requires Mg(2+) as cofactor.

The protein localises to the cytoplasm. It catalyses the reaction Endonucleolytic cleavage to 5'-phosphomonoester.. In terms of biological role, digests double-stranded RNA. Involved in the processing of primary rRNA transcript to yield the immediate precursors to the large and small rRNAs (23S and 16S). Processes some mRNAs, and tRNAs when they are encoded in the rRNA operon. Processes pre-crRNA and tracrRNA of type II CRISPR loci if present in the organism. The protein is Ribonuclease 3 of Vibrio parahaemolyticus serotype O3:K6 (strain RIMD 2210633).